The primary structure comprises 36 residues: MFKPRVILLITIIAVFSEFKKAFKGLFEKAANKYLH.

Positions 1-19 are cleaved as a signal peptide; it reads MFKPRVILLITIIAVFSEF.

The protein belongs to the limacoditoxin-7 family. In terms of tissue distribution, expressed by the venom secretory cell of the spine. The spine is a cuticular structure containing a single large nucleated venom-secreting cell at its base. It is an independent unit capable of producing, storing and injecting venom. On the back of D.vulnerans caterpillars, spines are grouped together by 50 to 100 to form scoli, of which there are eight in D.vulnerans.

The protein resides in the secreted. In terms of biological role, peptide with insecticidal and antiparasitic activities. Induces irreversible paralysis in D.melanogaster when tested at high doses. It shows a moderate antiparasitic activity against the major pathogenic nematode of ruminants (H.contortus, EC(50)=41.3 uM). Does not show antimicrobial activities. Does not induce increase in intracellular calcium in mouse DRG neurons, suggesting that it does not induce pain. The protein is U-limacoditoxin(7)-Dv63 of Doratifera vulnerans (Mottled cup moth).